The primary structure comprises 273 residues: Orotidine 5'-phosphate decarboxylase (273 aa).

K95 (proton donor) is an active-site residue.

This sequence belongs to the OMP decarboxylase family. Type 2 subfamily.

It catalyses the reaction orotidine 5'-phosphate + H(+) = UMP + CO2. The protein operates within pyrimidine metabolism; UMP biosynthesis via de novo pathway; UMP from orotate: step 2/2. The chain is Orotidine 5'-phosphate decarboxylase from Bordetella bronchiseptica (strain ATCC BAA-588 / NCTC 13252 / RB50) (Alcaligenes bronchisepticus).